The chain runs to 538 residues: Phosphoenolpyruvate carboxykinase (ATP) (538 aa).

R62, Y203, and K209 together coordinate substrate. Residues K209, H228, and 244-252 (GLSGTGKTT) each bind ATP. Mn(2+)-binding residues include K209 and H228. Residue D265 participates in Mn(2+) binding. ATP contacts are provided by residues E293, R329, 445–446 (RI), and T451. R329 is a binding site for substrate.

Belongs to the phosphoenolpyruvate carboxykinase (ATP) family. As to quaternary structure, monomer. Mn(2+) is required as a cofactor.

Its subcellular location is the cytoplasm. It carries out the reaction oxaloacetate + ATP = phosphoenolpyruvate + ADP + CO2. Its pathway is carbohydrate biosynthesis; gluconeogenesis. Involved in the gluconeogenesis. Catalyzes the conversion of oxaloacetate (OAA) to phosphoenolpyruvate (PEP) through direct phosphoryl transfer between the nucleoside triphosphate and OAA. In Haemophilus ducreyi (strain 35000HP / ATCC 700724), this protein is Phosphoenolpyruvate carboxykinase (ATP).